We begin with the raw amino-acid sequence, 472 residues long: Cysteine--tRNA ligase (472 aa).

Residue C29 participates in Zn(2+) binding. The short motif at P31–N41 is the 'HIGH' region element. Zn(2+) is bound by residues C214, H239, and E243. The 'KMSKS' region signature appears at K273–S277. K276 lines the ATP pocket.

This sequence belongs to the class-I aminoacyl-tRNA synthetase family. Monomer. It depends on Zn(2+) as a cofactor.

It localises to the cytoplasm. It catalyses the reaction tRNA(Cys) + L-cysteine + ATP = L-cysteinyl-tRNA(Cys) + AMP + diphosphate. The polypeptide is Cysteine--tRNA ligase (Lactobacillus gasseri (strain ATCC 33323 / DSM 20243 / BCRC 14619 / CIP 102991 / JCM 1131 / KCTC 3163 / NCIMB 11718 / NCTC 13722 / AM63)).